The chain runs to 184 residues: Peptide deformylase 2 (184 aa).

Fe cation contacts are provided by cysteine 110 and histidine 153. Glutamate 154 is an active-site residue. Histidine 157 is a binding site for Fe cation.

Belongs to the polypeptide deformylase family. Requires Fe(2+) as cofactor.

The enzyme catalyses N-terminal N-formyl-L-methionyl-[peptide] + H2O = N-terminal L-methionyl-[peptide] + formate. Its function is as follows. Removes the formyl group from the N-terminal Met of newly synthesized proteins. Requires at least a dipeptide for an efficient rate of reaction. N-terminal L-methionine is a prerequisite for activity but the enzyme has broad specificity at other positions. This is Peptide deformylase 2 from Bacillus anthracis.